The following is a 365-amino-acid chain: Phospho-N-acetylmuramoyl-pentapeptide-transferase (365 aa).

The next 9 membrane-spanning stretches (helical) occupy residues 19–39, 47–67, 91–111, 115–135, 155–175, 184–204, 224–244, 281–301, and 344–364; these read LLIL…WLLT, AVIL…FGVI, AGTP…VALI, FDPQ…IGWV, LLLQ…TGSP, GNLI…VLVA, AIAF…LMIF, AVGL…IFFV, and TQIV…GFIS.

The protein belongs to the glycosyltransferase 4 family. MraY subfamily. The cofactor is Mg(2+).

Its subcellular location is the cell inner membrane. It carries out the reaction UDP-N-acetyl-alpha-D-muramoyl-L-alanyl-gamma-D-glutamyl-meso-2,6-diaminopimeloyl-D-alanyl-D-alanine + di-trans,octa-cis-undecaprenyl phosphate = di-trans,octa-cis-undecaprenyl diphospho-N-acetyl-alpha-D-muramoyl-L-alanyl-D-glutamyl-meso-2,6-diaminopimeloyl-D-alanyl-D-alanine + UMP. It participates in cell wall biogenesis; peptidoglycan biosynthesis. Catalyzes the initial step of the lipid cycle reactions in the biosynthesis of the cell wall peptidoglycan: transfers peptidoglycan precursor phospho-MurNAc-pentapeptide from UDP-MurNAc-pentapeptide onto the lipid carrier undecaprenyl phosphate, yielding undecaprenyl-pyrophosphoryl-MurNAc-pentapeptide, known as lipid I. The polypeptide is Phospho-N-acetylmuramoyl-pentapeptide-transferase (Gloeothece citriformis (strain PCC 7424) (Cyanothece sp. (strain PCC 7424))).